An 86-amino-acid polypeptide reads, in one-letter code: Small ribosomal subunit protein bS18c (86 aa).

It belongs to the bacterial ribosomal protein bS18 family. As to quaternary structure, part of the 30S ribosomal subunit.

It is found in the plastid. The protein resides in the chloroplast. In Pseudotsuga menziesii (Douglas-fir), this protein is Small ribosomal subunit protein bS18c.